Here is a 316-residue protein sequence, read N- to C-terminus: Deoxyribonuclease-1-like 1 (316 aa).

The N-terminal stretch at 1–28 is a signal peptide; it reads MHSSGGFQKAIHGHALLLLLLLASGAET. Active-site residues include Glu107 and His158. Cys197 and Cys234 are disulfide-bonded. Residue Asn271 is glycosylated (N-linked (GlcNAc...) asparagine).

The protein belongs to the DNase I family.

It localises to the endoplasmic reticulum. In Bos taurus (Bovine), this protein is Deoxyribonuclease-1-like 1 (DNASE1L1).